Consider the following 665-residue polypeptide: MKDQYKVLYDPIKIGKLEIKNRYVLAPMGPGGMCNADGSFNKRGIEFYVERAKGGTGLIMTGVTMVENNIEKCALPSMPCPTINPLNFITTGNEMTERVHAYGAKIFLQLSAGFGRVSIPSIVGKVAVAPSKIPHRFLPGVTCRELTTEEVKEYVKAFGESAEIAKKAGFDGVEIHAVHEGYLLDQFAISFFNHRTDEYGGSLENRLRFACEVVQEIKKRCGQDFPVSLRYSIKSFIKDWCKGGLPDEEFEEKGRDIPEGIEAAKILVAAGYDALNGDVGSYDSWYWSHPPMYQKKGLYLPYNEILKKVVDVPIITAGRMEDPELSSDAILSGKTDMIALGRPLLADAEIPNKIFEDKYDKVRPCLSCQEGCMGRLQNFATVSCAVNPACGREKEYGLKKAEQIKKVLIVGGGVAGMEAARVAAIRGHKVTLIEKNGYLGGNIVPGGVPDFKDDDRALVKWYEGILKDLGVEIKLNVAASKENIKEFGADEVLLATGSSPRTLTIEGADKVYSAEDVLMERKNVGEKVIIIGGGLVGCETALWLKQQGKEVTIVEMQNDILQVGGPLCHANHDMLIDLIKFNKIDVKASSYISKKTDEGFVLNTNGEESIINADSAVVAIGYLSEKDLYSEVRFDIPNARLIGDANKVQNIMYAIWSAYEVAKNI.

Glutamine 109 serves as a coordination point for FMN. Catalysis depends on tyrosine 182, which acts as the Proton donor. Residues arginine 230, arginine 319, and 341–342 (GR) contribute to the FMN site. Residues cysteine 365, cysteine 368, cysteine 372, and cysteine 384 each contribute to the [4Fe-4S] cluster site. Residues alanine 415, glutamate 434, asparagine 442, lysine 452, and alanine 479 each coordinate FAD.

It in the N-terminal section; belongs to the NADH:flavin oxidoreductase/NADH oxidase family. It depends on FMN as a cofactor. FAD is required as a cofactor. Requires [4Fe-4S] cluster as cofactor.

The catalysed reaction is 3-phenylpropanoate + NAD(+) = (E)-cinnamate + NADH + H(+). It functions in the pathway amino-acid degradation; L-phenylalanine degradation. Functionally, involved in the fermentation of L-phenylalanine via a Stickland reaction. Catalyzes the reduction of (E)-cinnamate to yield 3-phenylpropionate. The protein is Cinnamate reductase of Clostridium sporogenes (strain ATCC 7955 / DSM 767 / NBRC 16411 / NCIMB 8053 / NCTC 8594 / PA 3679).